The sequence spans 244 residues: 14-3-3 protein beta/alpha-A (244 aa).

At Met-1 the chain carries N-acetylmethionine.

The protein belongs to the 14-3-3 family. In terms of assembly, homodimer, and heterodimer with other family members.

The protein resides in the cytoplasm. In terms of biological role, adapter protein implicated in the regulation of a large spectrum of both general and specialized signaling pathways. Binds to a large number of partners, usually by recognition of a phosphoserine or phosphothreonine motif. Binding generally results in the modulation of the activity of the binding partner. The protein is 14-3-3 protein beta/alpha-A (ywhab-a) of Xenopus laevis (African clawed frog).